The sequence spans 100 residues: Urease subunit gamma (100 aa).

This sequence belongs to the urease gamma subunit family. In terms of assembly, heterotrimer of UreA (gamma), UreB (beta) and UreC (alpha) subunits. Three heterotrimers associate to form the active enzyme.

The protein resides in the cytoplasm. It catalyses the reaction urea + 2 H2O + H(+) = hydrogencarbonate + 2 NH4(+). The protein operates within nitrogen metabolism; urea degradation; CO(2) and NH(3) from urea (urease route): step 1/1. The protein is Urease subunit gamma of Clostridium perfringens.